Here is a 220-residue protein sequence, read N- to C-terminus: Adenylate kinase (220 aa).

10 to 15 (GAGKGT) is an ATP binding site. The interval 30-59 (STGDMLRAAVKAGTPLGVEAKGYMDAGKLV) is NMP. Residues T31, R36, 57 to 59 (KLV), 85 to 88 (GFPR), and Q92 each bind AMP. The interval 122 to 159 (GRRTHPASGRTYHVKFNPPKVEGKDDVTGEPLIQRDDD) is LID. ATP contacts are provided by residues R123 and 132–133 (TY). 2 residues coordinate AMP: R156 and R167. Residue G206 coordinates ATP.

The protein belongs to the adenylate kinase family. In terms of assembly, monomer.

Its subcellular location is the cytoplasm. The catalysed reaction is AMP + ATP = 2 ADP. It participates in purine metabolism; AMP biosynthesis via salvage pathway; AMP from ADP: step 1/1. Catalyzes the reversible transfer of the terminal phosphate group between ATP and AMP. Plays an important role in cellular energy homeostasis and in adenine nucleotide metabolism. The sequence is that of Adenylate kinase from Burkholderia multivorans (strain ATCC 17616 / 249).